The sequence spans 428 residues: Enolase (428 aa).

Glutamine 163 is a binding site for (2R)-2-phosphoglycerate. Catalysis depends on glutamate 205, which acts as the Proton donor. 3 residues coordinate Mg(2+): aspartate 242, glutamate 285, and aspartate 312. (2R)-2-phosphoglycerate contacts are provided by lysine 337, arginine 366, serine 367, and lysine 388. The Proton acceptor role is filled by lysine 337.

This sequence belongs to the enolase family. It depends on Mg(2+) as a cofactor.

The protein resides in the cytoplasm. Its subcellular location is the secreted. It localises to the cell surface. The catalysed reaction is (2R)-2-phosphoglycerate = phosphoenolpyruvate + H2O. The protein operates within carbohydrate degradation; glycolysis; pyruvate from D-glyceraldehyde 3-phosphate: step 4/5. Functionally, catalyzes the reversible conversion of 2-phosphoglycerate (2-PG) into phosphoenolpyruvate (PEP). It is essential for the degradation of carbohydrates via glycolysis. This is Enolase from Rhodopirellula baltica (strain DSM 10527 / NCIMB 13988 / SH1).